The primary structure comprises 206 residues: Ribosomal RNA small subunit methyltransferase G (206 aa).

S-adenosyl-L-methionine-binding positions include glycine 73, leucine 78, 124 to 125, and arginine 139; that span reads VE.

Belongs to the methyltransferase superfamily. RNA methyltransferase RsmG family.

It is found in the cytoplasm. It carries out the reaction guanosine(527) in 16S rRNA + S-adenosyl-L-methionine = N(7)-methylguanosine(527) in 16S rRNA + S-adenosyl-L-homocysteine. Specifically methylates the N7 position of guanine in position 527 of 16S rRNA. This chain is Ribosomal RNA small subunit methyltransferase G, found in Sodalis glossinidius (strain morsitans).